The following is a 52-amino-acid chain: Large ribosomal subunit protein bL33 (52 aa).

The protein belongs to the bacterial ribosomal protein bL33 family.

This Chlamydia pneumoniae (Chlamydophila pneumoniae) protein is Large ribosomal subunit protein bL33 (rpmG).